Reading from the N-terminus, the 172-residue chain is Signal peptidase complex catalytic subunit SEC11 (172 aa).

Residues 1 to 15 (MVNFGAQSIRQTLVQ) lie on the Cytoplasmic side of the membrane. The helical; Signal-anchor for type II membrane protein transmembrane segment at 16–36 (LLGFAAIFTSSYMFYKGLSIV) threads the bilayer. Topologically, residues 37–172 (ANSESPLVVV…TGLLAFIQGE (136 aa)) are lumenal. Catalysis depends on charge relay system residues S50, H89, and D114. The segment at 158-169 (GLLGITGLLAFI) is C-terminal short (CTS) helix.

It belongs to the peptidase S26B family. As to quaternary structure, component of the signal peptidase complex (SPC) composed of a catalytic subunit SEC11 and three accessory subunits SPC1, SPC2 and SPC3. The complex induces a local thinning of the ER membrane which is used to measure the length of the signal peptide (SP) h-region of protein substrates. This ensures the selectivity of the complex towards h-regions shorter than 18-20 amino acids. SPC associates with the translocon complex.

The protein localises to the endoplasmic reticulum membrane. It carries out the reaction Cleavage of hydrophobic, N-terminal signal or leader sequences from secreted and periplasmic proteins.. Its function is as follows. Catalytic component of the signal peptidase complex (SPC) which catalyzes the cleavage of N-terminal signal sequences from nascent proteins as they are translocated into the lumen of the endoplasmic reticulum. Specifically cleaves N-terminal signal peptides that contain a hydrophobic alpha-helix (h-region) shorter than 18-20 amino acids. This Yarrowia lipolytica (strain CLIB 122 / E 150) (Yeast) protein is Signal peptidase complex catalytic subunit SEC11 (SEC11).